The primary structure comprises 126 residues: Glycine cleavage system H protein (126 aa).

The 83-residue stretch at Thr21–Lys103 folds into the Lipoyl-binding domain. The residue at position 62 (Lys62) is an N6-lipoyllysine.

Belongs to the GcvH family. The glycine cleavage system is composed of four proteins: P, T, L and H. The cofactor is (R)-lipoate.

In terms of biological role, the glycine cleavage system catalyzes the degradation of glycine. The H protein shuttles the methylamine group of glycine from the P protein to the T protein. This Aliivibrio fischeri (strain MJ11) (Vibrio fischeri) protein is Glycine cleavage system H protein.